Here is a 314-residue protein sequence, read N- to C-terminus: tRNA dimethylallyltransferase (314 aa).

Position 13–20 (13–20) interacts with ATP; it reads GPTAIGKT. 15–20 is a binding site for substrate; sequence TAIGKT. Residues 38 to 41 form an interaction with substrate tRNA region; that stretch reads DSMQ.

This sequence belongs to the IPP transferase family. In terms of assembly, monomer. Requires Mg(2+) as cofactor.

It carries out the reaction adenosine(37) in tRNA + dimethylallyl diphosphate = N(6)-dimethylallyladenosine(37) in tRNA + diphosphate. In terms of biological role, catalyzes the transfer of a dimethylallyl group onto the adenine at position 37 in tRNAs that read codons beginning with uridine, leading to the formation of N6-(dimethylallyl)adenosine (i(6)A). This chain is tRNA dimethylallyltransferase, found in Desulfotalea psychrophila (strain LSv54 / DSM 12343).